Consider the following 405-residue polypeptide: Glucose-1-phosphate adenylyltransferase 1 (405 aa).

Residues tyrosine 96, glycine 161, 176–177 (EK), and serine 194 each bind alpha-D-glucose 1-phosphate.

It belongs to the bacterial/plant glucose-1-phosphate adenylyltransferase family. In terms of assembly, homotetramer.

It catalyses the reaction alpha-D-glucose 1-phosphate + ATP + H(+) = ADP-alpha-D-glucose + diphosphate. It functions in the pathway glycan biosynthesis; glycogen biosynthesis. In terms of biological role, involved in the biosynthesis of ADP-glucose, a building block required for the elongation reactions to produce glycogen. Catalyzes the reaction between ATP and alpha-D-glucose 1-phosphate (G1P) to produce pyrophosphate and ADP-Glc. This chain is Glucose-1-phosphate adenylyltransferase 1, found in Vibrio vulnificus (strain YJ016).